The sequence spans 477 residues: GTPase Der (477 aa).

2 EngA-type G domains span residues 3–167 and 206–382; these read LTIA…GKER and LRIA…RMWN. GTP-binding positions include 9–16, 56–60, 119–122, 212–219, 259–263, and 324–327; these read GRPNVGKS, DTAGL, NKSE, GRPNTGKS, and NKWD. In terms of domain architecture, KH-like spans 383 to 467; sequence RRISTAKLNR…PIRISLRASD (85 aa).

The protein belongs to the TRAFAC class TrmE-Era-EngA-EngB-Septin-like GTPase superfamily. EngA (Der) GTPase family. In terms of assembly, associates with the 50S ribosomal subunit.

GTPase that plays an essential role in the late steps of ribosome biogenesis. This chain is GTPase Der, found in Bartonella quintana (strain Toulouse) (Rochalimaea quintana).